The following is a 285-amino-acid chain: Diphthine methyl ester synthase (285 aa).

S-adenosyl-L-methionine-binding positions include leucine 9, aspartate 84, glycine 87, 112 to 113, leucine 163, valine 221, and histidine 246; that span reads SI.

This sequence belongs to the diphthine synthase family.

It is found in the cytoplasm. It catalyses the reaction 2-[(3S)-amino-3-carboxypropyl]-L-histidyl-[translation elongation factor 2] + 4 S-adenosyl-L-methionine = diphthine methyl ester-[translation elongation factor 2] + 4 S-adenosyl-L-homocysteine + 3 H(+). Its pathway is protein modification; peptidyl-diphthamide biosynthesis. S-adenosyl-L-methionine-dependent methyltransferase that catalyzes four methylations of the modified target histidine residue in translation elongation factor 2 (EF-2), to form an intermediate called diphthine methyl ester. The four successive methylation reactions represent the second step of diphthamide biosynthesis. This Aspergillus fumigatus (strain ATCC MYA-4609 / CBS 101355 / FGSC A1100 / Af293) (Neosartorya fumigata) protein is Diphthine methyl ester synthase (dph5).